Consider the following 163-residue polypeptide: Shikimate kinase (163 aa).

Residue Gly10–Thr15 coordinates ATP. Residue Thr14 coordinates Mg(2+). Substrate is bound by residues Asp28, Arg52, and Gly75. Residue Arg116 participates in ATP binding. A substrate-binding site is contributed by Arg134.

The protein belongs to the shikimate kinase family. In terms of assembly, monomer. Mg(2+) is required as a cofactor.

It is found in the cytoplasm. It catalyses the reaction shikimate + ATP = 3-phosphoshikimate + ADP + H(+). Its pathway is metabolic intermediate biosynthesis; chorismate biosynthesis; chorismate from D-erythrose 4-phosphate and phosphoenolpyruvate: step 5/7. In terms of biological role, catalyzes the specific phosphorylation of the 3-hydroxyl group of shikimic acid using ATP as a cosubstrate. The sequence is that of Shikimate kinase from Streptococcus suis (strain 98HAH33).